Reading from the N-terminus, the 241-residue chain is Cobalt transport protein CbiM (241 aa).

Positions 1–24 (MKKIKIISFSVAYLILLTPIYASA) are cleaved as a signal peptide. 6 helical membrane passes run 30–50 (GFLPPLWAAIWSVISLPFIVG), 67–87 (LLLGLVGAFVFVLSALKLPSV), 99–119 (LGTIIFGPLPMAVIGLIVLIF), 131–151 (TLGANVFSMAIVGPFAGYFIF), 160–180 (SLAVFLAAMLADLITYIVTSL), and 202–222 (GIFAITQIPLAIGEGILTLIV).

The protein belongs to the CbiM family. Forms an energy-coupling factor (ECF) transporter complex composed of an ATP-binding protein (A component, CbiO), a transmembrane protein (T component, CbiQ) and 2 possible substrate-capture proteins (S components, CbiM and CbiN) of unknown stoichimetry.

It is found in the cell membrane. Its pathway is cofactor biosynthesis; adenosylcobalamin biosynthesis. In terms of biological role, part of the energy-coupling factor (ECF) transporter complex CbiMNOQ involved in cobalt import. The chain is Cobalt transport protein CbiM from Acetoanaerobium sticklandii (strain ATCC 12662 / DSM 519 / JCM 1433 / CCUG 9281 / NCIMB 10654 / HF) (Clostridium sticklandii).